The sequence spans 471 residues: ATP synthase subunit beta (471 aa).

157–164 (GGAGVGKT) lines the ATP pocket.

Belongs to the ATPase alpha/beta chains family. In terms of assembly, F-type ATPases have 2 components, CF(1) - the catalytic core - and CF(0) - the membrane proton channel. CF(1) has five subunits: alpha(3), beta(3), gamma(1), delta(1), epsilon(1). CF(0) has three main subunits: a(1), b(2) and c(9-12). The alpha and beta chains form an alternating ring which encloses part of the gamma chain. CF(1) is attached to CF(0) by a central stalk formed by the gamma and epsilon chains, while a peripheral stalk is formed by the delta and b chains.

The protein localises to the cell inner membrane. The catalysed reaction is ATP + H2O + 4 H(+)(in) = ADP + phosphate + 5 H(+)(out). Functionally, produces ATP from ADP in the presence of a proton gradient across the membrane. The catalytic sites are hosted primarily by the beta subunits. This chain is ATP synthase subunit beta, found in Trichlorobacter lovleyi (strain ATCC BAA-1151 / DSM 17278 / SZ) (Geobacter lovleyi).